Reading from the N-terminus, the 255-residue chain is Indole-3-glycerol phosphate synthase (255 aa).

This sequence belongs to the TrpC family.

The catalysed reaction is 1-(2-carboxyphenylamino)-1-deoxy-D-ribulose 5-phosphate + H(+) = (1S,2R)-1-C-(indol-3-yl)glycerol 3-phosphate + CO2 + H2O. It participates in amino-acid biosynthesis; L-tryptophan biosynthesis; L-tryptophan from chorismate: step 4/5. In Streptococcus thermophilus (strain ATCC BAA-250 / LMG 18311), this protein is Indole-3-glycerol phosphate synthase.